The primary structure comprises 434 residues: Glutamate-1-semialdehyde 2,1-aminomutase (434 aa).

Position 266 is an N6-(pyridoxal phosphate)lysine (Lys-266).

This sequence belongs to the class-III pyridoxal-phosphate-dependent aminotransferase family. HemL subfamily. In terms of assembly, homodimer. The cofactor is pyridoxal 5'-phosphate.

The protein localises to the cytoplasm. It catalyses the reaction (S)-4-amino-5-oxopentanoate = 5-aminolevulinate. It participates in porphyrin-containing compound metabolism; protoporphyrin-IX biosynthesis; 5-aminolevulinate from L-glutamyl-tRNA(Glu): step 2/2. The chain is Glutamate-1-semialdehyde 2,1-aminomutase from Psychrobacter sp. (strain PRwf-1).